The sequence spans 291 residues: MFEGVLPALITPFTKDDTIDRTGLIKNIEFAENGKVTGVVVCGTTGESATLSTAEHMEVIDIAVECANVPVVAGTGSNNTAEAVELTKHAEEAGASGALVISPYYNKPNKAGLISHFRTIAEAVEIPIVLYNVPSRTGQDISLEVITELAKIDNIVGIKEASGNLDKASQIIENTMDEDFKVTSGDDGLTLPIMSIGGCGVISVVANIVPDRMSRLVNAFNEGDTATAQQLHYEIAPLIRALFTETNPVPIKRAMNLVGLNAGHLRPPLAPISAENNKLLANCLKELGCLQ.

Position 45 (threonine 45) interacts with pyruvate. Tyrosine 131 acts as the Proton donor/acceptor in catalysis. The Schiff-base intermediate with substrate role is filled by lysine 159. Isoleucine 202 serves as a coordination point for pyruvate.

This sequence belongs to the DapA family. In terms of assembly, homotetramer; dimer of dimers.

It localises to the cytoplasm. It carries out the reaction L-aspartate 4-semialdehyde + pyruvate = (2S,4S)-4-hydroxy-2,3,4,5-tetrahydrodipicolinate + H2O + H(+). The protein operates within amino-acid biosynthesis; L-lysine biosynthesis via DAP pathway; (S)-tetrahydrodipicolinate from L-aspartate: step 3/4. Catalyzes the condensation of (S)-aspartate-beta-semialdehyde [(S)-ASA] and pyruvate to 4-hydroxy-tetrahydrodipicolinate (HTPA). In Methanococcoides burtonii (strain DSM 6242 / NBRC 107633 / OCM 468 / ACE-M), this protein is 4-hydroxy-tetrahydrodipicolinate synthase.